Here is a 276-residue protein sequence, read N- to C-terminus: Undecaprenyl-diphosphatase (276 aa).

8 consecutive transmembrane segments (helical) span residues 1–21 (MSWLQVVVLSVLQGLTEFLPV), 39–59 (AGASFTAVCQLGTEAAVLVYF), 84–104 (YWLGWWVIIGTIPISVIGLLF), 115–135 (LWLVATAMIVFSFVIAAAEYA), 159–179 (LALVPGVSRSGATISAGLFLG), 190–210 (FLLAIPAVFASGLFSLPDAFA), 222–242 (QLLVSTVIAFVVGYAAVAWFL), and 253–273 (FVGYRIILGSVVLILLSTGVV).

It belongs to the UppP family.

The protein localises to the cell membrane. The enzyme catalyses di-trans,octa-cis-undecaprenyl diphosphate + H2O = di-trans,octa-cis-undecaprenyl phosphate + phosphate + H(+). Functionally, catalyzes the dephosphorylation of undecaprenyl diphosphate (UPP). Confers resistance to bacitracin. This is Undecaprenyl-diphosphatase from Mycolicibacterium gilvum (strain PYR-GCK) (Mycobacterium gilvum (strain PYR-GCK)).